The sequence spans 218 residues: UPF0758 protein SAUSA300_1608 (218 aa).

In terms of domain architecture, MPN spans lysine 92 to phenylalanine 214. Zn(2+) is bound by residues histidine 163, histidine 165, and aspartate 176. A JAMM motif motif is present at residues histidine 163 to aspartate 176.

This sequence belongs to the UPF0758 family.

The polypeptide is UPF0758 protein SAUSA300_1608 (Staphylococcus aureus (strain USA300)).